The primary structure comprises 251 residues: Triosephosphate isomerase (251 aa).

12–14 provides a ligand contact to substrate; sequence NWK. The Electrophile role is filled by His-98. Glu-168 (proton acceptor) is an active-site residue. Substrate is bound by residues Gly-174, Ser-213, and 234–235; that span reads GG.

This sequence belongs to the triosephosphate isomerase family. Homodimer.

It is found in the cytoplasm. It catalyses the reaction D-glyceraldehyde 3-phosphate = dihydroxyacetone phosphate. It functions in the pathway carbohydrate biosynthesis; gluconeogenesis. Its pathway is carbohydrate degradation; glycolysis; D-glyceraldehyde 3-phosphate from glycerone phosphate: step 1/1. Involved in the gluconeogenesis. Catalyzes stereospecifically the conversion of dihydroxyacetone phosphate (DHAP) to D-glyceraldehyde-3-phosphate (G3P). The protein is Triosephosphate isomerase of Afipia carboxidovorans (strain ATCC 49405 / DSM 1227 / KCTC 32145 / OM5) (Oligotropha carboxidovorans).